A 660-amino-acid polypeptide reads, in one-letter code: Threonine--tRNA ligase (660 aa).

In terms of domain architecture, TGS spans 1–64 (MSHSVSLTFP…TEGRIEIVTR (64 aa)). The tract at residues 245–547 (DHRRLGREMD…LLENFAGHMP (303 aa)) is catalytic. Residues cysteine 341, histidine 392, and histidine 524 each coordinate Zn(2+).

It belongs to the class-II aminoacyl-tRNA synthetase family. As to quaternary structure, homodimer. Zn(2+) serves as cofactor.

The protein resides in the cytoplasm. The enzyme catalyses tRNA(Thr) + L-threonine + ATP = L-threonyl-tRNA(Thr) + AMP + diphosphate + H(+). In terms of biological role, catalyzes the attachment of threonine to tRNA(Thr) in a two-step reaction: L-threonine is first activated by ATP to form Thr-AMP and then transferred to the acceptor end of tRNA(Thr). Also edits incorrectly charged L-seryl-tRNA(Thr). The polypeptide is Threonine--tRNA ligase (Sinorhizobium medicae (strain WSM419) (Ensifer medicae)).